We begin with the raw amino-acid sequence, 309 residues long: Histone-lysine N-methyltransferase SETMAR (309 aa).

The region spanning 74-137 (PGCACIETPC…RCRNRVVQNG (64 aa)) is the Pre-SET domain. Residues C76, C78, C83, C88, C90, C119, C123, C125, and C129 each coordinate Zn(2+). Residues 140–264 (FLLQVFQTEK…PGEELSYDYS (125 aa)) enclose the SET domain. S-adenosyl-L-methionine-binding positions include 150–152 (KGW), Y193, R221, and 224–225 (NH). Zn(2+)-binding residues include C227, C288, C290, and C295. In terms of domain architecture, Post-SET spans 284-300 (PRKPCYCGAQSCTTFLP).

It belongs to the class V-like SAM-binding methyltransferase superfamily.

Its subcellular location is the nucleus. The protein resides in the chromosome. The enzyme catalyses L-lysyl(36)-[histone H3] + 2 S-adenosyl-L-methionine = N(6),N(6)-dimethyl-L-lysyl(36)-[histone H3] + 2 S-adenosyl-L-homocysteine + 2 H(+). Its function is as follows. Histone methyltransferase that methylates 'Lys-4' and 'Lys-36' of histone H3, 2 specific tags for epigenetic transcriptional activation. Specifically mediates dimethylation of H3 'Lys-36'. The sequence is that of Histone-lysine N-methyltransferase SETMAR from Mus musculus (Mouse).